The sequence spans 95 residues: Aspartyl/glutamyl-tRNA(Asn/Gln) amidotransferase subunit C (95 aa).

This sequence belongs to the GatC family. As to quaternary structure, heterotrimer of A, B and C subunits.

It catalyses the reaction L-glutamyl-tRNA(Gln) + L-glutamine + ATP + H2O = L-glutaminyl-tRNA(Gln) + L-glutamate + ADP + phosphate + H(+). It carries out the reaction L-aspartyl-tRNA(Asn) + L-glutamine + ATP + H2O = L-asparaginyl-tRNA(Asn) + L-glutamate + ADP + phosphate + 2 H(+). Its function is as follows. Allows the formation of correctly charged Asn-tRNA(Asn) or Gln-tRNA(Gln) through the transamidation of misacylated Asp-tRNA(Asn) or Glu-tRNA(Gln) in organisms which lack either or both of asparaginyl-tRNA or glutaminyl-tRNA synthetases. The reaction takes place in the presence of glutamine and ATP through an activated phospho-Asp-tRNA(Asn) or phospho-Glu-tRNA(Gln). The protein is Aspartyl/glutamyl-tRNA(Asn/Gln) amidotransferase subunit C of Marinobacter nauticus (strain ATCC 700491 / DSM 11845 / VT8) (Marinobacter aquaeolei).